The following is a 327-amino-acid chain: GMP reductase (327 aa).

Residue Cys-176 is the Thioimidate intermediate of the active site. 205-228 (IIADGGIRTHGDIAKSIRFGASMV) is an NADP(+) binding site.

This sequence belongs to the IMPDH/GMPR family. GuaC type 2 subfamily.

It carries out the reaction IMP + NH4(+) + NADP(+) = GMP + NADPH + 2 H(+). Its function is as follows. Catalyzes the irreversible NADPH-dependent deamination of GMP to IMP. It functions in the conversion of nucleobase, nucleoside and nucleotide derivatives of G to A nucleotides, and in maintaining the intracellular balance of A and G nucleotides. The polypeptide is GMP reductase (Streptococcus suis (strain 98HAH33)).